Reading from the N-terminus, the 778-residue chain is Molybdenum cofactor sulfurase (778 aa).

Lys-235 is modified (N6-(pyridoxal phosphate)lysine). Residue Cys-399 is part of the active site. Disordered regions lie at residues 576–596 (LSKN…SRVC) and 654–673 (ARPA…DTEK). Low complexity predominate over residues 584–594 (RSSSSRSRSSR). An MOSC domain is found at 651–778 (LPTARPALPG…ETAERARSRL (128 aa)).

This sequence belongs to the class-V pyridoxal-phosphate-dependent aminotransferase family. MOCOS subfamily. Pyridoxal 5'-phosphate is required as a cofactor.

The enzyme catalyses Mo-molybdopterin + L-cysteine + AH2 = thio-Mo-molybdopterin + L-alanine + A + H2O. The protein operates within cofactor biosynthesis; molybdopterin biosynthesis. Sulfurates the molybdenum cofactor. Sulfation of molybdenum is essential for xanthine dehydrogenase (XDH) and aldehyde oxidase (ADO) enzymes in which molybdenum cofactor is liganded by 1 oxygen and 1 sulfur atom in active form. The polypeptide is Molybdenum cofactor sulfurase (Chaetomium globosum (strain ATCC 6205 / CBS 148.51 / DSM 1962 / NBRC 6347 / NRRL 1970) (Soil fungus)).